A 319-amino-acid chain; its full sequence is Acetyl-coenzyme A carboxylase carboxyl transferase subunit alpha (319 aa).

The CoA carboxyltransferase C-terminal domain occupies 35-296 (NIDEEVHRLR…KAQLLADLAD (262 aa)).

It belongs to the AccA family. In terms of assembly, acetyl-CoA carboxylase is a heterohexamer composed of biotin carboxyl carrier protein (AccB), biotin carboxylase (AccC) and two subunits each of ACCase subunit alpha (AccA) and ACCase subunit beta (AccD).

Its subcellular location is the cytoplasm. It carries out the reaction N(6)-carboxybiotinyl-L-lysyl-[protein] + acetyl-CoA = N(6)-biotinyl-L-lysyl-[protein] + malonyl-CoA. It participates in lipid metabolism; malonyl-CoA biosynthesis; malonyl-CoA from acetyl-CoA: step 1/1. In terms of biological role, component of the acetyl coenzyme A carboxylase (ACC) complex. First, biotin carboxylase catalyzes the carboxylation of biotin on its carrier protein (BCCP) and then the CO(2) group is transferred by the carboxyltransferase to acetyl-CoA to form malonyl-CoA. This is Acetyl-coenzyme A carboxylase carboxyl transferase subunit alpha from Klebsiella pneumoniae subsp. pneumoniae (strain ATCC 700721 / MGH 78578).